We begin with the raw amino-acid sequence, 457 residues long: ATP synthase subunit beta (457 aa).

147 to 154 (GGAGVGKT) is a binding site for ATP.

The protein belongs to the ATPase alpha/beta chains family. F-type ATPases have 2 components, CF(1) - the catalytic core - and CF(0) - the membrane proton channel. CF(1) has five subunits: alpha(3), beta(3), gamma(1), delta(1), epsilon(1). CF(0) has three main subunits: a(1), b(2) and c(9-12). The alpha and beta chains form an alternating ring which encloses part of the gamma chain. CF(1) is attached to CF(0) by a central stalk formed by the gamma and epsilon chains, while a peripheral stalk is formed by the delta and b chains.

Its subcellular location is the cell inner membrane. It carries out the reaction ATP + H2O + 4 H(+)(in) = ADP + phosphate + 5 H(+)(out). Functionally, produces ATP from ADP in the presence of a proton gradient across the membrane. The catalytic sites are hosted primarily by the beta subunits. The sequence is that of ATP synthase subunit beta from Glaesserella parasuis serovar 5 (strain SH0165) (Haemophilus parasuis).